Consider the following 26-residue polypeptide: Citropin-2.1.3 (26 aa).

As to expression, expressed by the dorsal and submental skin glands.

The protein localises to the secreted. The sequence is that of Citropin-2.1.3 from Ranoidea citropa (Australian Blue Mountains tree frog).